A 165-amino-acid polypeptide reads, in one-letter code: Large ribosomal subunit protein uL10 (165 aa).

This sequence belongs to the universal ribosomal protein uL10 family. As to quaternary structure, part of the ribosomal stalk of the 50S ribosomal subunit. The N-terminus interacts with L11 and the large rRNA to form the base of the stalk. The C-terminus forms an elongated spine to which L12 dimers bind in a sequential fashion forming a multimeric L10(L12)X complex.

Its function is as follows. Forms part of the ribosomal stalk, playing a central role in the interaction of the ribosome with GTP-bound translation factors. This chain is Large ribosomal subunit protein uL10, found in Sodalis glossinidius (strain morsitans).